Consider the following 179-residue polypeptide: Large ribosomal subunit protein uL5 (179 aa).

It belongs to the universal ribosomal protein uL5 family. Part of the 50S ribosomal subunit; part of the 5S rRNA/L5/L18/L25 subcomplex. Contacts the 5S rRNA and the P site tRNA. Forms a bridge to the 30S subunit in the 70S ribosome.

Functionally, this is one of the proteins that bind and probably mediate the attachment of the 5S RNA into the large ribosomal subunit, where it forms part of the central protuberance. In the 70S ribosome it contacts protein S13 of the 30S subunit (bridge B1b), connecting the 2 subunits; this bridge is implicated in subunit movement. Contacts the P site tRNA; the 5S rRNA and some of its associated proteins might help stabilize positioning of ribosome-bound tRNAs. The chain is Large ribosomal subunit protein uL5 from Staphylococcus saprophyticus subsp. saprophyticus (strain ATCC 15305 / DSM 20229 / NCIMB 8711 / NCTC 7292 / S-41).